The following is a 406-amino-acid chain: MSPPSQIKPPQGTTPVPPSELDPRSDEEIVRSISAHVKPTDSEKNMWAYWHSGWENMPPWTKRNVVHWARMLGTEWTVRVLDGIPGSANYYERFVPPHLLPSAMRERRMSGPYVATHSADFVRLPLLFLYGGCWLDVGAILVRSIQDVWDVLADPKQSYEFAAFTYMMRPGEASIINTWMMGRKNMELLRRWHDTFLHLWGDKSSCDGLHKHPLLSHLRPLSSLTHGLITDENNEPVAKTDKIIDYGAQVYCLDRLRDLVDTNDGWNGRQCIEEKTFLLAALDEMWYYQPKTDYLGSRQFELLTTRYDAPEPQRGDAEEFVNDMLANTMLMKFCHGLKDAMVSSLADIWDDPKHDGTDCAPGTFAEYLRWGTLHLRQTRTLEPVKLTAPAGKLHHVAMFEPFPSTN.

The interval 1–26 (MSPPSQIKPPQGTTPVPPSELDPRSD) is disordered.

Belongs to the afumC glycosyltransferase family.

It participates in mycotoxin biosynthesis. O-glycosyltransferase; part of the 2 gene clusters that mediate the biosynthesis of fusicoccins, diterpene glucosides that display phytohormone-like activity and function as potent activators of plasma membrane H(+)-ATPases in plants by modifying 14-3-3 proteins and cause the plant disease constriction canker. The first step in the pathway is performed by the fusicoccadiene synthase PaFS that possesses both prenyl transferase and terpene cyclase activity, converting isopentenyl diphosphate and dimethylallyl diphosphate into geranylgeranyl diphosphate (GGDP) and successively converting GGDP into fusicocca-2,10(14)-diene, a precursor for fusicoccin H. The second step is the oxidation at the C-8 position by the cytochrome P450 monooxygenase PaP450-2 to yield fusicocca-2,10(14)-diene-8-beta-ol. The cytochrome P450 monooxygenase PaP450-1 then catalyzes the hydroxylation at the C-16 position to produce fusicocca-2,10(14)-diene-8-beta,16-diol. The dioxygenase fc-dox then catalyzes the 16-oxydation of fusicocca-2,10(14)-diene-8-beta,16-diol to yield an aldehyde (8-beta-hydroxyfusicocca-1,10(14)-dien-16-al). The short-chain dehydrogenase/reductase fc-sdr catalyzes the reduction of the aldehyde to yield fusicocca-1,10(14)-diene-8-beta,16-diol. The next step is the hydroxylation at C-9 performed by the cytochrome P450 monooxygenase PaP450-3 that leads to fusicoccin H aglycon which is glycosylated to fusicoccin H by the O-glycosyltransferase PaGT. Hydroxylation at C-12 by the cytochrome P450 monooxygenase PaP450-4 leads then to the production of fusicoccin Q and is followed by methylation by the O-methyltransferase PaMT to yield fusicoccin P. Fusicoccin P is further converted to fusicoccin J via prenylation by the O-glucose prenyltransferase PaPT. Cytochrome P450 monooxygenase PaP450-5 then performs hydroxylation at C-19 to yield dideacetyl-fusicoccin A which is acetylated to 3'-O-deacetyl-fusicoccin A by the O-acetyltransferase PaAT-2. Finally, a another acetylation by the O-acetyltransferase PaAT-1 yields fusicoccin A. This Phomopsis amygdali (Fusicoccum amygdali) protein is O-glycosyltransferase PaGT.